The following is a 344-amino-acid chain: Methionine import ATP-binding protein MetN (344 aa).

The ABC transporter domain occupies 2 to 241 (IEIRNLSQRF…PHHEVTRALI (240 aa)). 38–45 (GRSGAGKS) contributes to the ATP binding site.

The protein belongs to the ABC transporter superfamily. Methionine importer (TC 3.A.1.24) family. In terms of assembly, the complex is composed of two ATP-binding proteins (MetN), two transmembrane proteins (MetI) and a solute-binding protein (MetQ).

The protein resides in the cell inner membrane. The enzyme catalyses L-methionine(out) + ATP + H2O = L-methionine(in) + ADP + phosphate + H(+). It catalyses the reaction D-methionine(out) + ATP + H2O = D-methionine(in) + ADP + phosphate + H(+). In terms of biological role, part of the ABC transporter complex MetNIQ involved in methionine import. Responsible for energy coupling to the transport system. This chain is Methionine import ATP-binding protein MetN, found in Burkholderia thailandensis (strain ATCC 700388 / DSM 13276 / CCUG 48851 / CIP 106301 / E264).